The following is a 124-amino-acid chain: MRLPTFLKRPRTARQIVGQMGEDEALRYLQKQGLALIERNFRCKGGEIDLVMQDGDTLVFVEVRKRADKNHGGAAASVTPEKQKRLIVAAHIFLQRYKMPPACRFDVIAIDATEMNWLKNAIES.

Belongs to the UPF0102 family.

In Herminiimonas arsenicoxydans, this protein is UPF0102 protein HEAR0176.